Here is a 104-residue protein sequence, read N- to C-terminus: uncharacterized protein (104 aa).

The segment at 1–24 (MISTEKSSDAVAMHCPSGDQHNSE) is disordered.

This is an uncharacterized protein from Saccharomyces cerevisiae (strain ATCC 204508 / S288c) (Baker's yeast).